We begin with the raw amino-acid sequence, 382 residues long: Apolipoprotein A-IV (382 aa).

Residues 1-20 (MFLKAVVLTLSLVAVTGAQA) form the signal peptide. Repeat copies occupy residues 33–54 (DYFS…KSEL), 60–81 (ALFQ…KKLV), 82–103 (PFAT…EEIR), 115–136 (PHAD…QRLG), 137–158 (PYAE…NQLT), 159–180 (AHAQ…ASLT), 181–202 (PYAD…GHLT), 203–224 (PYAD…RSLA), 225–246 (PYAQ…FQMK), 247–268 (KNAE…QKLV), 269–286 (PVAE…EELQ), 287–308 (KSLA…RNVG), and 309–330 (PYGE…QKLG). Residues 33 to 330 (DYFSQLSNNA…QVEELRQKLG (298 aa)) form a 13 X 22 AA approximate tandem repeats region.

It belongs to the apolipoprotein A1/A4/E family. Homodimer. Post-translationally, phosphorylation sites are present in the extracellular medium.

It is found in the secreted. In terms of biological role, may have a role in chylomicrons and VLDL secretion and catabolism. Required for efficient activation of lipoprotein lipase by ApoC-II; potent activator of LCAT. Apoa-IV is a major component of HDL and chylomicrons. This Neomonachus schauinslandi (Hawaiian monk seal) protein is Apolipoprotein A-IV (APOA4).